The chain runs to 411 residues: [Pyruvate dehydrogenase (acetyl-transferring)] kinase isozyme 4, mitochondrial (411 aa).

The 231-residue stretch at 138–368 folds into the Histidine kinase domain; the sequence is IIEYKDACTV…DAIIYLKALS (231 aa). ATP-binding positions include 254-261, Asp-293, 312-313, and 329-334; these read ELFKNAMR, ST, and GFGYGL.

This sequence belongs to the PDK/BCKDK protein kinase family. As to quaternary structure, homodimer. Interacts with the pyruvate dehydrogenase complex subunit DLAT, and is part of the multimeric pyruvate dehydrogenase complex that contains multiple copies of pyruvate dehydrogenase (E1), dihydrolipoamide acetyltransferase (DLAT, E2) and lipoamide dehydrogenase (DLD, E3). Ubiquitous; highest levels of expression in heart and skeletal muscle.

The protein resides in the mitochondrion matrix. The enzyme catalyses L-seryl-[pyruvate dehydrogenase E1 alpha subunit] + ATP = O-phospho-L-seryl-[pyruvate dehydrogenase E1 alpha subunit] + ADP + H(+). In terms of biological role, kinase that plays a key role in regulation of glucose and fatty acid metabolism and homeostasis via phosphorylation of the pyruvate dehydrogenase subunits PDHA1 and PDHA2. This inhibits pyruvate dehydrogenase activity, and thereby regulates metabolite flux through the tricarboxylic acid cycle, down-regulates aerobic respiration and inhibits the formation of acetyl-coenzyme A from pyruvate. Inhibition of pyruvate dehydrogenase decreases glucose utilization and increases fat metabolism in response to prolonged fasting and starvation. Plays an important role in maintaining normal blood glucose levels under starvation, and is involved in the insulin signaling cascade. Via its regulation of pyruvate dehydrogenase activity, plays an important role in maintaining normal blood pH and in preventing the accumulation of ketone bodies under starvation. In the fed state, mediates cellular responses to glucose levels and to a high-fat diet. Regulates both fatty acid oxidation and de novo fatty acid biosynthesis. Plays a role in the generation of reactive oxygen species. Protects detached epithelial cells against anoikis. Plays a role in cell proliferation via its role in regulating carbohydrate and fatty acid metabolism. The protein is [Pyruvate dehydrogenase (acetyl-transferring)] kinase isozyme 4, mitochondrial (PDK4) of Homo sapiens (Human).